The sequence spans 202 residues: Probable pathogenesis-related protein CaO19.2336 (202 aa).

Positions 1-20 (MKTLLFIYLQLLLLLSIIIG) are cleaved as a signal peptide. 2 N-linked (GlcNAc...) asparagine glycosylation sites follow: Asn58 and Asn152. Residues 66–179 (LKEHNNKRKL…LNALYIVCSY (114 aa)) enclose the SCP domain.

The protein belongs to the CRISP family.

The protein resides in the secreted. In terms of biological role, secreted protein that acts as a virulence factor during infections. This is Probable pathogenesis-related protein CaO19.2336 from Candida albicans (strain SC5314 / ATCC MYA-2876) (Yeast).